The following is a 50-amino-acid chain: Apoptotic protease-activating factor 1 (50 aa).

In terms of domain architecture, CARD spans 1–31 (ILKKDNYSYISFYNALIHEGYKDLAALLHSG). In terms of domain architecture, NB-ARC spans 46–50 (GGITS).

As to quaternary structure, monomer. Oligomerizes to a heptameric ring, known as the apoptosome, upon binding of cytochrome c and dATP. Oligomeric Apaf-1 and pro-caspase-9 bind to each other via their respective NH2-terminal CARD domains and consecutively mature caspase-9 is released from the complex. Interacts with APIP. Interacts (via CARD and NACHT domains) with NAIP/BIRC1 (via NACHT domain). Interacts with CIAO2A.

In terms of biological role, oligomeric Apaf-1 mediates the cytochrome c-dependent autocatalytic activation of pro-caspase 9 (Apaf-3), leading to the activation of caspase-3 and apoptosis. This activation requires ATP. The chain is Apoptotic protease-activating factor 1 (APAF1) from Canis lupus familiaris (Dog).